The primary structure comprises 269 residues: Cleavage and polyadenylation specificity factor subunit 4 (269 aa).

5 consecutive C3H1-type zinc fingers follow at residues 35–61 (KSGAAVCEFFLKAACGKGGMCPFRHIS), 62–89 (GEKTVVCKHWLRGLCKKGDQCEFLHEYD), 90–117 (MTKMPECYFYSKFGECSNKECPFLHIDP), 118–142 (ESKIKDCPWYDRGFCKHGPLCRHRH), and 143–169 (TRRVICVNYLVGFCPEGPSCKFMHPRF). The disordered stretch occupies residues 173 to 199 (MGTTEQPPLPQQTQPPAKQSNNPPLQR). A phosphoserine mark is found at Ser-200, Ser-202, and Ser-212. The segment at 243-260 (VTCYKCGEKGHYANRCTK) adopts a CCHC-type zinc-finger fold. Residue Ser-267 is modified to Phosphoserine.

Belongs to the CPSF4/YTH1 family. In terms of assembly, component of the cleavage and polyadenylation specificity factor (CPSF) complex, composed of CPSF1, CPSF2, CPSF3, CPSF4 and FIP1L1. Interacts with FIP1L1. (Microbial infection) Interacts with influenza A virus NS1 blocks processing of pre-mRNAs, thereby preventing nuclear export of host cell mRNAs.

Its subcellular location is the nucleus. Component of the cleavage and polyadenylation specificity factor (CPSF) complex that play a key role in pre-mRNA 3'-end formation, recognizing the AAUAAA signal sequence and interacting with poly(A) polymerase and other factors to bring about cleavage and poly(A) addition. CPSF4 binds RNA polymers with a preference for poly(U). The protein is Cleavage and polyadenylation specificity factor subunit 4 (CPSF4) of Homo sapiens (Human).